The following is a 360-amino-acid chain: Protein NDRG2 (360 aa).

Residues 325–360 are disordered; that stretch reads RTASLSSEGNRSRSRTLSQSSESGGGPPAPLAEVTC.

The protein belongs to the NDRG family.

It localises to the cytoplasm. Its function is as follows. Contributes to the regulation of the Wnt signaling pathway. Down-regulates CTNNB1-mediated transcriptional activation of target genes. May be involved in neuron differentiation. The chain is Protein NDRG2 from Xenopus tropicalis (Western clawed frog).